The primary structure comprises 324 residues: Phospho-N-acetylmuramoyl-pentapeptide-transferase (324 aa).

Helical transmembrane passes span 5–25 (GLLV…PLFI), 52–72 (PTMG…IMAI), 77–97 (LGAE…IGFL), 122–142 (VIAI…YIMI), 149–169 (FELG…GSNA), 176–196 (LDGL…IIAV), 201–221 (FGVA…LVFN), 227–247 (VFMG…VAIL), 253–273 (LLVI…IQVI), and 302–322 (VVVT…YIGV).

It belongs to the glycosyltransferase 4 family. MraY subfamily. Mg(2+) serves as cofactor.

Its subcellular location is the cell membrane. The catalysed reaction is UDP-N-acetyl-alpha-D-muramoyl-L-alanyl-gamma-D-glutamyl-meso-2,6-diaminopimeloyl-D-alanyl-D-alanine + di-trans,octa-cis-undecaprenyl phosphate = di-trans,octa-cis-undecaprenyl diphospho-N-acetyl-alpha-D-muramoyl-L-alanyl-D-glutamyl-meso-2,6-diaminopimeloyl-D-alanyl-D-alanine + UMP. The protein operates within cell wall biogenesis; peptidoglycan biosynthesis. Its function is as follows. Catalyzes the initial step of the lipid cycle reactions in the biosynthesis of the cell wall peptidoglycan: transfers peptidoglycan precursor phospho-MurNAc-pentapeptide from UDP-MurNAc-pentapeptide onto the lipid carrier undecaprenyl phosphate, yielding undecaprenyl-pyrophosphoryl-MurNAc-pentapeptide, known as lipid I. This is Phospho-N-acetylmuramoyl-pentapeptide-transferase from Bacillus mycoides (strain KBAB4) (Bacillus weihenstephanensis).